The following is a 147-amino-acid chain: Vasopressin-neurophysin 2-copeptin (147 aa).

Cys1 and Cys6 are joined by a disulfide. The residue at position 9 (Gly9) is a Glycine amide. Cystine bridges form between Cys22-Cys66, Cys25-Cys39, Cys33-Cys56, Cys40-Cys46, Cys73-Cys85, Cys79-Cys97, and Cys86-Cys91. Asn114 is a glycosylation site (N-linked (GlcNAc...) asparagine).

It belongs to the vasopressin/oxytocin family. As to quaternary structure, interacts with vasopressin receptors V1bR/AVPR1B (Ki=85 pM), V1aR/AVPR1A (Ki=0.6 nM) and V2R/AVPR2 (Ki=4.9 nM). Interacts with oxytocin receptor (OXTR) (Ki=110 nM).

Its subcellular location is the secreted. Functionally, neurophysin 2 specifically binds vasopressin. Vasopressin has a direct antidiuretic action on the kidney, it also causes vasoconstriction of the peripheral vessels. Acts by binding to vasopressin receptors (V1bR/AVPR1B, V1aR/AVPR1A, and V2R/AVPR2). This Ovis aries (Sheep) protein is Vasopressin-neurophysin 2-copeptin (AVP).